The primary structure comprises 694 residues: Elongation factor G (694 aa).

The 280-residue stretch at 8–287 (EDYRNFGIMA…AVISYLPSPV (280 aa)) folds into the tr-type G domain. Residues 17–24 (AHIDAGKT), 86–90 (DTPGH), and 140–143 (NKMD) contribute to the GTP site.

It belongs to the TRAFAC class translation factor GTPase superfamily. Classic translation factor GTPase family. EF-G/EF-2 subfamily.

The protein resides in the cytoplasm. Catalyzes the GTP-dependent ribosomal translocation step during translation elongation. During this step, the ribosome changes from the pre-translocational (PRE) to the post-translocational (POST) state as the newly formed A-site-bound peptidyl-tRNA and P-site-bound deacylated tRNA move to the P and E sites, respectively. Catalyzes the coordinated movement of the two tRNA molecules, the mRNA and conformational changes in the ribosome. The chain is Elongation factor G from Bartonella quintana (strain Toulouse) (Rochalimaea quintana).